A 64-amino-acid polypeptide reads, in one-letter code: Large ribosomal subunit protein bL35c (64 aa).

The protein belongs to the bacterial ribosomal protein bL35 family.

It is found in the plastid. The protein resides in the chloroplast. The polypeptide is Large ribosomal subunit protein bL35c (Phaeodactylum tricornutum (strain CCAP 1055/1)).